Reading from the N-terminus, the 412-residue chain is Probable serine/threonine-protein kinase PBL4 (412 aa).

Residue glycine 2 is the site of N-myristoyl glycine attachment. A lipid anchor (S-palmitoyl cysteine) is attached at cysteine 4. Residues arginine 14–glutamine 40 are disordered. The span at serine 21–glutamine 40 shows a compositional bias: low complexity. Position 72 is a phosphothreonine (threonine 72). Residues phenylalanine 83–leucine 369 enclose the Protein kinase domain. ATP is bound by residues isoleucine 89–valine 97 and lysine 121. Tyrosine 167 carries the phosphotyrosine modification. The active-site Proton acceptor is the aspartate 215. A phosphoserine mark is found at serine 219 and serine 249. 2 positions are modified to phosphothreonine: threonine 250 and threonine 255. A Phosphotyrosine modification is found at tyrosine 263.

Belongs to the protein kinase superfamily. Ser/Thr protein kinase family.

The protein localises to the cell membrane. It carries out the reaction L-seryl-[protein] + ATP = O-phospho-L-seryl-[protein] + ADP + H(+). The catalysed reaction is L-threonyl-[protein] + ATP = O-phospho-L-threonyl-[protein] + ADP + H(+). May be involved in plant defense signaling. This Arabidopsis thaliana (Mouse-ear cress) protein is Probable serine/threonine-protein kinase PBL4.